The chain runs to 439 residues: Perilipin-3 (439 aa).

Residues 1–19 (MFASETEASASSTQVTTEE) are compositionally biased toward low complexity. Positions 1-26 (MFASETEASASSTQVTTEEPVQQPSV) are disordered. Lys-66 is subject to N6-acetyllysine. Residue Ser-92 is modified to Phosphoserine. Residue Lys-123 forms a Glycyl lysine isopeptide (Lys-Gly) (interchain with G-Cter in SUMO1) linkage. Phosphoserine is present on Ser-131. Thr-175 carries the phosphothreonine modification. Phosphoserine is present on residues Ser-180 and Ser-184. Residue Thr-221 is modified to Phosphothreonine. Phosphoserine is present on residues Ser-222 and Ser-246. 2 coiled-coil regions span residues 254–282 (RAYE…QALS) and 358–381 (AHVK…FSGM). Tyr-256 bears the Phosphotyrosine mark.

This sequence belongs to the perilipin family. Homooligomer. Interacts with M6PR (via the cytoplasmic domain). Interacts with IGF2R (via the cytoplasmic domain). In terms of processing, phosphorylation at Tyr-256 by isoform 1 of CHKA (CHKalpha2) promotes dissociation from lipid droplets: dissociation is followed by recruitment of autophagosome machinery to lipid droplets and subsequent lipid droplet lipolysis.

Its subcellular location is the lipid droplet. It localises to the endosome membrane. It is found in the cytoplasm. Its function is as follows. Structural component of lipid droplets, which is required for the formation and maintenance of lipid storage droplets. Required for the transport of mannose 6-phosphate receptors (MPR) from endosomes to the trans-Golgi network. The chain is Perilipin-3 (PLIN3) from Sus scrofa (Pig).